We begin with the raw amino-acid sequence, 241 residues long: Mitochondrial inner membrane protease ATP23 (241 aa).

Residue H141 coordinates a divalent metal cation. Residue E142 is part of the active site. Residue H145 participates in a divalent metal cation binding.

This sequence belongs to the peptidase M76 family.

It is found in the mitochondrion inner membrane. Its function is as follows. Has a dual role in the assembly of mitochondrial ATPase. Acts as a protease that removes N-terminal residues of mitochondrial ATPase CF(0) subunit 6 at the intermembrane space side. Also involved in the correct assembly of the membrane-embedded ATPase CF(0) particle, probably mediating association of subunit 6 with the subunit 9 ring. The polypeptide is Mitochondrial inner membrane protease ATP23 (ATP23) (Lodderomyces elongisporus (strain ATCC 11503 / CBS 2605 / JCM 1781 / NBRC 1676 / NRRL YB-4239) (Yeast)).